A 358-amino-acid chain; its full sequence is Photosystem II protein D1 2 (358 aa).

Helical transmembrane passes span tyrosine 28–isoleucine 45, histidine 117–leucine 132, and tryptophan 141–alanine 155. Histidine 117 is a binding site for chlorophyll a. Position 125 (tyrosine 125) interacts with pheophytin a. The [CaMn4O5] cluster site is built by aspartate 169 and glutamate 188. The chain crosses the membrane as a helical span at residues phenylalanine 196–leucine 217. Residue histidine 197 coordinates chlorophyll a. A quinone-binding positions include histidine 214 and serine 263–phenylalanine 264. Residue histidine 214 participates in Fe cation binding. Residue histidine 271 participates in Fe cation binding. A helical transmembrane segment spans residues phenylalanine 273 to methionine 287. Residues histidine 331, glutamate 332, aspartate 341, and alanine 343 each contribute to the [CaMn4O5] cluster site. A propeptide spanning residues threonine 344 to glycine 358 is cleaved from the precursor.

This sequence belongs to the reaction center PufL/M/PsbA/D family. PSII is composed of 1 copy each of membrane proteins PsbA, PsbB, PsbC, PsbD, PsbE, PsbF, PsbH, PsbI, PsbJ, PsbK, PsbL, PsbM, PsbT, PsbX, PsbY, PsbZ, Psb30/Ycf12, peripheral proteins PsbO, CyanoQ (PsbQ), PsbU, PsbV and a large number of cofactors. It forms dimeric complexes. It depends on The D1/D2 heterodimer binds P680, chlorophylls that are the primary electron donor of PSII, and subsequent electron acceptors. It shares a non-heme iron and each subunit binds pheophytin, quinone, additional chlorophylls, carotenoids and lipids. D1 provides most of the ligands for the Mn4-Ca-O5 cluster of the oxygen-evolving complex (OEC). There is also a Cl(-1) ion associated with D1 and D2, which is required for oxygen evolution. The PSII complex binds additional chlorophylls, carotenoids and specific lipids. as a cofactor. Tyr-160 forms a radical intermediate that is referred to as redox-active TyrZ, YZ or Y-Z. In terms of processing, C-terminally processed by CtpA; processing is essential to allow assembly of the oxygen-evolving complex and thus photosynthetic growth.

The protein resides in the cellular thylakoid membrane. It catalyses the reaction 2 a plastoquinone + 4 hnu + 2 H2O = 2 a plastoquinol + O2. Photosystem II (PSII) is a light-driven water:plastoquinone oxidoreductase that uses light energy to abstract electrons from H(2)O, generating O(2) and a proton gradient subsequently used for ATP formation. It consists of a core antenna complex that captures photons, and an electron transfer chain that converts photonic excitation into a charge separation. The D1/D2 (PsbA/PsbD) reaction center heterodimer binds P680, the primary electron donor of PSII as well as several subsequent electron acceptors. This is Photosystem II protein D1 2 from Parasynechococcus marenigrum (strain WH8102).